We begin with the raw amino-acid sequence, 331 residues long: Ribosomal RNA small subunit methyltransferase H (331 aa).

S-adenosyl-L-methionine-binding positions include 38–40 (GGY), Asp-56, Phe-83, Asp-100, and Gln-107. The segment at 287–331 (DEAELAENPRARSARLRVGVRTDAPAGKVDPQALGTPLIPKKGRR) is disordered.

This sequence belongs to the methyltransferase superfamily. RsmH family.

It localises to the cytoplasm. It carries out the reaction cytidine(1402) in 16S rRNA + S-adenosyl-L-methionine = N(4)-methylcytidine(1402) in 16S rRNA + S-adenosyl-L-homocysteine + H(+). Functionally, specifically methylates the N4 position of cytidine in position 1402 (C1402) of 16S rRNA. This chain is Ribosomal RNA small subunit methyltransferase H, found in Cereibacter sphaeroides (strain ATCC 17023 / DSM 158 / JCM 6121 / CCUG 31486 / LMG 2827 / NBRC 12203 / NCIMB 8253 / ATH 2.4.1.) (Rhodobacter sphaeroides).